Reading from the N-terminus, the 131-residue chain is Increased copper sensitivity protein 3 (131 aa).

Helical transmembrane passes span 35 to 55 and 74 to 94; these read ISVL…IFFS and IALT…IIAF.

It is found in the membrane. In Saccharomyces cerevisiae (strain ATCC 204508 / S288c) (Baker's yeast), this protein is Increased copper sensitivity protein 3 (ICS3).